The sequence spans 67 residues: DNA-directed RNA polymerase subunit omega (67 aa).

The protein belongs to the RNA polymerase subunit omega family. In terms of assembly, the RNAP catalytic core consists of 2 alpha, 1 beta, 1 beta' and 1 omega subunit. When a sigma factor is associated with the core the holoenzyme is formed, which can initiate transcription.

It catalyses the reaction RNA(n) + a ribonucleoside 5'-triphosphate = RNA(n+1) + diphosphate. Its function is as follows. Promotes RNA polymerase assembly. Latches the N- and C-terminal regions of the beta' subunit thereby facilitating its interaction with the beta and alpha subunits. The protein is DNA-directed RNA polymerase subunit omega of Ralstonia pickettii (strain 12J).